The primary structure comprises 385 residues: UPF0284 protein A9601_04941 (385 aa).

Belongs to the UPF0284 family.

The protein is UPF0284 protein A9601_04941 of Prochlorococcus marinus (strain AS9601).